The following is a 136-amino-acid chain: Large ribosomal subunit protein uL16c (136 aa).

It belongs to the universal ribosomal protein uL16 family. In terms of assembly, part of the 50S ribosomal subunit.

It localises to the plastid. The protein resides in the chloroplast. In Illicium oligandrum (Star anise), this protein is Large ribosomal subunit protein uL16c.